The primary structure comprises 540 residues: CWF19-like protein 1 (540 aa).

Residues Glu265–Pro326 are disordered. The segment covering Pro267–Lys277 has biased composition (basic and acidic residues).

The protein belongs to the CWF19 family.

This is CWF19-like protein 1 (cwf19l1) from Xenopus laevis (African clawed frog).